Here is a 209-residue protein sequence, read N- to C-terminus: MGKFEVLDHPLIQHKLTLIRDKHCSTKEFREIVNEISTLMAYEVSRDMPLMDVEIETPIGKSIQKQISGKKVAIVPILRAGLGMVDGMAELLPVARIGHIGMYRDEETLKPTEYFVKLPSDISERQVFVVDPMLATGGSAIMAVDALKKRGAKDIRFCSLVAAPEGVKALQEAHPDIDIYTAALDEKLNEDGYIVPGLGDAGDRLFGTK.

Residues Arg79, Arg104, and 131–139 (DPMLATGGS) contribute to the 5-phospho-alpha-D-ribose 1-diphosphate site. Uracil contacts are provided by residues Ile194 and 199-201 (GDA). 5-phospho-alpha-D-ribose 1-diphosphate is bound at residue Asp200.

This sequence belongs to the UPRTase family. Requires Mg(2+) as cofactor.

It carries out the reaction UMP + diphosphate = 5-phospho-alpha-D-ribose 1-diphosphate + uracil. It functions in the pathway pyrimidine metabolism; UMP biosynthesis via salvage pathway; UMP from uracil: step 1/1. Allosterically activated by GTP. In terms of biological role, catalyzes the conversion of uracil and 5-phospho-alpha-D-ribose 1-diphosphate (PRPP) to UMP and diphosphate. This Pediococcus pentosaceus (strain ATCC 25745 / CCUG 21536 / LMG 10740 / 183-1w) protein is Uracil phosphoribosyltransferase.